Here is a 217-residue protein sequence, read N- to C-terminus: 3,4-dihydroxy-2-butanone 4-phosphate synthase (217 aa).

Residues 37–38, D42, 150–154, and E174 contribute to the D-ribulose 5-phosphate site; these read RE and RRGHT. Mg(2+) is bound at residue E38. Residue H153 participates in Mg(2+) binding.

This sequence belongs to the DHBP synthase family. Homodimer. Requires Mg(2+) as cofactor. Mn(2+) serves as cofactor.

The enzyme catalyses D-ribulose 5-phosphate = (2S)-2-hydroxy-3-oxobutyl phosphate + formate + H(+). The protein operates within cofactor biosynthesis; riboflavin biosynthesis; 2-hydroxy-3-oxobutyl phosphate from D-ribulose 5-phosphate: step 1/1. Its function is as follows. Catalyzes the conversion of D-ribulose 5-phosphate to formate and 3,4-dihydroxy-2-butanone 4-phosphate. This chain is 3,4-dihydroxy-2-butanone 4-phosphate synthase, found in Shewanella baltica (strain OS155 / ATCC BAA-1091).